We begin with the raw amino-acid sequence, 860 residues long: MTDSPDRLIATDLRNEMSQSYLEYAMSVIVGRALPDARDGLKPVHRRILYAMYELGLTPDRPFRKCARVVGEVLGKYHPHGDTAVYDALVRMAQDFSMREPLIDGHGNFGSVDNDPPAAMRYTESRLRPLSTNSLLRDIEAETVDFIDNFDGSQQEPTVLPARIPQLLINGSSGIAVGMATNIPPHNLGEVIDGAIALIRNPEITEQELMQIIPGPDFPTGAQILGRSGIREAYLTGRGSITMRGVASIETMEHPGRPDRDAIIVTELPYQTNKAALIERIADLVNDKKIDGIADIRDESDRDGMRIVIELKRDAYARVVLNNLYKQTPIQSNFGANLLALVNGTPEVLTIKKFLTVFWEFRIETITRRTRYELRKAEERDHLLQGLLIALDNLDAVIRLIRGAADTASAKTELVEGFSLSEVQADAILQMQLRRLTALEADKITAEHDELQTKIADFQDILARRERVNAIIEEELEQIKAIHATPRRTVIVQEDGELIDTDLIANDQALILLTEQGYIKRMPASTFGTQNRATRGKAAAKIKDDDGVEHFLSCCDHDKVLFFSDRGVVYSLNAYQIPIASRTARGVPIVQMLPIPKDEKITSLVSVSEFDDDTYFIMLTKQGYIKKTALSAFSNIRANGLIAISLVEGDQLRWVRLAKAEDSVIIGSQKGMAIHFKADQDELRALGRATRGVKSMRLRSGDALISMDILPSQVVANIAVGSEDEPDEDLGGDTDAILEESDNPGPWLLGVTMKGFGKRVPIGQFRLQHRAGLGVKAIRFKSKDDQLVALHVVNADDELMIVTNRGIIIRQSVNDISPQSRSATGVRVQRLDADDAIAAVALVPPSGEEELAEMSESEES.

The region spanning 34–503 (LPDARDGLKP…EDGELIDTDL (470 aa)) is the Topo IIA-type catalytic domain. Residue Y122 is the O-(5'-phospho-DNA)-tyrosine intermediate of the active site. Positions 530–536 (QNRATRG) match the GyrA-box motif.

This sequence belongs to the type II topoisomerase GyrA/ParC subunit family. In terms of assembly, heterotetramer, composed of two GyrA and two GyrB chains. In the heterotetramer, GyrA contains the active site tyrosine that forms a transient covalent intermediate with DNA, while GyrB binds cofactors and catalyzes ATP hydrolysis.

The protein localises to the cytoplasm. It carries out the reaction ATP-dependent breakage, passage and rejoining of double-stranded DNA.. Its function is as follows. A type II topoisomerase that negatively supercoils closed circular double-stranded (ds) DNA in an ATP-dependent manner to modulate DNA topology and maintain chromosomes in an underwound state. Negative supercoiling favors strand separation, and DNA replication, transcription, recombination and repair, all of which involve strand separation. Also able to catalyze the interconversion of other topological isomers of dsDNA rings, including catenanes and knotted rings. Type II topoisomerases break and join 2 DNA strands simultaneously in an ATP-dependent manner. The polypeptide is DNA gyrase subunit A (Synechocystis sp. (strain ATCC 27184 / PCC 6803 / Kazusa)).